Here is a 116-residue protein sequence, read N- to C-terminus: Large ribosomal subunit protein uL22 (116 aa).

The protein belongs to the universal ribosomal protein uL22 family. In terms of assembly, part of the 50S ribosomal subunit.

Functionally, this protein binds specifically to 23S rRNA; its binding is stimulated by other ribosomal proteins, e.g. L4, L17, and L20. It is important during the early stages of 50S assembly. It makes multiple contacts with different domains of the 23S rRNA in the assembled 50S subunit and ribosome. Its function is as follows. The globular domain of the protein is located near the polypeptide exit tunnel on the outside of the subunit, while an extended beta-hairpin is found that lines the wall of the exit tunnel in the center of the 70S ribosome. This Leptospira biflexa serovar Patoc (strain Patoc 1 / Ames) protein is Large ribosomal subunit protein uL22.